The sequence spans 641 residues: 1,3-beta-glucanosyltransferase PGA5 (641 aa).

A signal peptide spans 1-23; that stretch reads MTTLSTIWLFLITITAIFQLGLS. Asn-25 is a glycosylation site (N-linked (GlcNAc...) asparagine). Cys-106 and Cys-135 are disulfide-bonded. Residues Tyr-124, Asn-192, Glu-193, Asp-234, and Arg-239 each coordinate (1,3-beta-D-glucosyl)n. Glu-193 functions as the Proton donor in the catalytic mechanism. Cystine bridges form between Cys-248–Cys-390, Cys-276–Cys-307, Cys-424–Cys-474, Cys-426–Cys-528, Cys-433–Cys-498, and Cys-451–Cys-456. The Nucleophile role is filled by Glu-304. Tyr-336 contacts (1,3-beta-D-glucosyl)n. Residues 535–613 are disordered; the sequence is KEEEKEVQEE…SPKTSKSIAG (79 aa). A compositionally biased stretch (basic and acidic residues) spans 571-581; it reads KSKEKEKGKLI. Residues 582–593 are compositionally biased toward acidic residues; it reads EEEEEEEEEEEE. Residues 596-610 are compositionally biased toward polar residues; that stretch reads KTPSSGEKSPKTSKS. An N-linked (GlcNAc...) asparagine glycan is attached at Asn-621. Asp-622 carries GPI-anchor amidated aspartate lipidation. Residues 623-641 constitute a propeptide, removed in mature form; the sequence is SIWKTFIEILFTCSAAILI.

This sequence belongs to the glycosyl hydrolase 72 family.

Its subcellular location is the cell membrane. Splits internally a 1,3-beta-glucan molecule and transfers the newly generated reducing end (the donor) to the non-reducing end of another 1,3-beta-glucan molecule (the acceptor) forming a 1,3-beta linkage, resulting in the elongation of 1,3-beta-glucan chains in the cell wall. Involved in spore wall assembly. The chain is 1,3-beta-glucanosyltransferase PGA5 (PGA5) from Candida albicans (strain SC5314 / ATCC MYA-2876) (Yeast).